Here is a 188-residue protein sequence, read N- to C-terminus: Ribosome maturation factor RimP (188 aa).

Belongs to the RimP family.

It is found in the cytoplasm. Required for maturation of 30S ribosomal subunits. The chain is Ribosome maturation factor RimP from Corynebacterium aurimucosum (strain ATCC 700975 / DSM 44827 / CIP 107346 / CN-1) (Corynebacterium nigricans).